The chain runs to 386 residues: MAEPNFAPGLEGVAATQSSISNIDGAAGLLSYRGFAIADLAAHSSFEEVALLLLDGVLPGAADLERFDHGLRAHRQVKYNVREIMKFMPVTGHPMDMLHCAVASLGMFYPQQELSDAERGNTLHLDAMAMRIIARMPTIVAMWEQMRFGNDPISPRPDLSHAANFLYMLSGREPDPAHTKILDSCLILHAEHTINASTFSVLVTGSTLTNPYHVIGGAIGTLAGPLHGGANQKVVEMLEEISSVQQVGAYLDRKMANKEKIWGFGHRIYKTRDPRAVILKGMMEDMASHGNLRHSSLFEIAIEVERQATERLGAQGIHANVDFYSGVLYHEMGIKADLFTPIFAMARSAGWLAHWREQLADNRIFRPTQVYTGEQDRRYVPVAQRT.

Catalysis depends on residues histidine 266 and aspartate 322.

It belongs to the citrate synthase family.

The catalysed reaction is oxaloacetate + acetyl-CoA + H2O = citrate + CoA + H(+). The protein operates within carbohydrate metabolism; tricarboxylic acid cycle; isocitrate from oxaloacetate: step 1/2. This is Citrate synthase (gltA) from Acidithiobacillus ferridurans.